The following is a 235-amino-acid chain: Glucosamine-6-phosphate deaminase (235 aa).

The active-site Proton acceptor; for enolization step is aspartate 62. Residue asparagine 128 is the For ring-opening step of the active site. Residue histidine 130 is the Proton acceptor; for ring-opening step of the active site. Glutamate 135 (for ring-opening step) is an active-site residue.

The protein belongs to the glucosamine/galactosamine-6-phosphate isomerase family. NagB subfamily.

The enzyme catalyses alpha-D-glucosamine 6-phosphate + H2O = beta-D-fructose 6-phosphate + NH4(+). It participates in amino-sugar metabolism; N-acetylneuraminate degradation; D-fructose 6-phosphate from N-acetylneuraminate: step 5/5. In terms of biological role, catalyzes the reversible isomerization-deamination of glucosamine 6-phosphate (GlcN6P) to form fructose 6-phosphate (Fru6P) and ammonium ion. This Streptococcus gordonii (strain Challis / ATCC 35105 / BCRC 15272 / CH1 / DL1 / V288) protein is Glucosamine-6-phosphate deaminase.